The primary structure comprises 196 residues: uncharacterized protein (196 aa).

A helical transmembrane segment spans residues 11–31 (ICGFLLVILTIGGVLGGVYLV).

It is found in the membrane. This is an uncharacterized protein from Mycoplasma genitalium (strain ATCC 33530 / DSM 19775 / NCTC 10195 / G37) (Mycoplasmoides genitalium).